Reading from the N-terminus, the 342-residue chain is uncharacterized protein (342 aa).

The signal sequence occupies residues 1–18 (MWKKLMLLLLMAIPLVSA).

This is an uncharacterized protein from Methanocaldococcus jannaschii (strain ATCC 43067 / DSM 2661 / JAL-1 / JCM 10045 / NBRC 100440) (Methanococcus jannaschii).